We begin with the raw amino-acid sequence, 424 residues long: CinA-like protein (424 aa).

The protein belongs to the CinA family.

This Shewanella baltica (strain OS195) protein is CinA-like protein.